A 798-amino-acid chain; its full sequence is MAHYPVFTVGLLTCLVLCINAQQGGTECLKANAKSCGECIQAGPNCGWCTKVDFLQEGEPTSARCDDLAALKSKGCPEDDIQNPRGRKQKLKDIPITSKGKGERMDPANITQLRPQQMVFELRSGEPQTFNLTFRRAEDYPIDLYYLMDLSFSMKDDLENVKSLGTALMTEMEKITSDFRIGFGSFVEKTVMPYISTTPAKLINPCTSDQNCTSPFSYKNVLNLTKDGKLFNDLVGKQQISGNLDSPEGGFDAIMQVAVCGEQIGWRNVTRLLVFSTDAGFHFAGDGKLGGIVLPNDGKCHLHENMYTMSHYYDYPSIAHLVQKLSENNIQTIFAVTEDFQPVYQELKNLIPKSAVGTLSSNSSNVIQLIIDSYNSLSSELILENSKLPEGVTISYKSFCKNGVKGTGEDGRKCSNISIGDQVEFEISVTAHKCPKKGQAESIKIKPLGFNEEVEIILQFLCECDCQDKGTPNSPECHFGNGTFECGACRCNDGRIGKECECSTDEVNSEDMDAYCRRENSSEICSNNGDCICGQCVCKKRDNPNEVYSGKYCECDNFNCDRSNGLICGGKGICKCRVCECFPNYSGSACDCSEDTSTCMAKNGQICNGRGICDCGRCKCTDPKFQGPTCELCQTCVGVCAEHKECVQCRAFQKGEKQDVCMEQCMHFNISLVDSREELPQPGQAEALTHCKEKDAEDCWFYFTYSVDSKNEVMVHVVKEPECPSGPDIIPIVAGVVAGIVLIGLALLLIWKLLMIIHDRREFAKFEKEKMNAKWDTGENPIYKSAVTTVVNPKYEGK.

The N-terminal stretch at 1–21 (MAHYPVFTVGLLTCLVLCINA) is a signal peptide. The Extracellular portion of the chain corresponds to 22-727 (QQGGTECLKA…VKEPECPSGP (706 aa)). A PSI domain is found at 27–77 (ECLKANAKSCGECIQAGPNCGWCTKVDFLQEGEPTSARCDDLAALKSKGCP). Cystine bridges form between cysteine 28–cysteine 46, cysteine 36–cysteine 464, cysteine 39–cysteine 65, cysteine 49–cysteine 76, cysteine 206–cysteine 212, cysteine 260–cysteine 300, cysteine 400–cysteine 414, cysteine 434–cysteine 462, cysteine 466–cysteine 486, cysteine 477–cysteine 489, cysteine 491–cysteine 500, cysteine 502–cysteine 533, cysteine 516–cysteine 531, cysteine 525–cysteine 536, cysteine 538–cysteine 553, cysteine 555–cysteine 576, cysteine 560–cysteine 574, cysteine 568–cysteine 579, cysteine 581–cysteine 590, cysteine 592–cysteine 615, cysteine 599–cysteine 613, cysteine 607–cysteine 618, cysteine 620–cysteine 630, cysteine 633–cysteine 636, cysteine 640–cysteine 691, cysteine 646–cysteine 665, cysteine 649–cysteine 661, and cysteine 699–cysteine 723. The segment at 76–106 (CPEDDIQNPRGRKQKLKDIPITSKGKGERMD) is disordered. N-linked (GlcNAc...) asparagine glycosylation is found at asparagine 109 and asparagine 131. A VWFA domain is found at 139–377 (DYPIDLYYLM…QLIIDSYNSL (239 aa)). Serine 151 and serine 153 together coordinate Mg(2+). Ca(2+) contacts are provided by serine 153, aspartate 156, aspartate 157, and glutamate 188. Asparagine 211 and asparagine 223 each carry an N-linked (GlcNAc...) asparagine glycan. Residues asparagine 243, aspartate 245, proline 247, and glutamate 248 each coordinate Ca(2+). Residue glutamate 248 participates in Mg(2+) binding. 2 N-linked (GlcNAc...) asparagine glycosylation sites follow: asparagine 268 and asparagine 362. Residue asparagine 416 is glycosylated (N-linked (GlcNAc...) asparagine). 4 consecutive I-EGF domains span residues 466-501 (CQDK…KECE), 502-554 (CSTD…KYCE), 555-591 (CDNF…SACD), and 592-631 (CSED…PTCE). The N-linked (GlcNAc...) asparagine glycan is linked to asparagine 481. Asparagine 520 is a glycosylation site (N-linked (GlcNAc...) asparagine). The N-linked (GlcNAc...) asparagine glycan is linked to asparagine 584. N-linked (GlcNAc...) asparagine glycosylation occurs at asparagine 669. The helical transmembrane segment at 728–751 (DIIPIVAGVVAGIVLIGLALLLIW) threads the bilayer. Residues 752–798 (KLLMIIHDRREFAKFEKEKMNAKWDTGENPIYKSAVTTVVNPKYEGK) are Cytoplasmic-facing. A Phosphotyrosine modification is found at tyrosine 783.

The protein belongs to the integrin beta chain family. As to quaternary structure, heterodimer of an alpha and a beta subunit.

It is found in the cell membrane. The protein resides in the cell projection. It localises to the invadopodium membrane. The protein localises to the ruffle membrane. Its subcellular location is the melanosome. It is found in the cleavage furrow. The protein resides in the lamellipodium. It localises to the ruffle. Its function is as follows. Beta integrins associate with alpha subunits to form receptor complexes that recognize the sequence R-G-D in a wide array of ligands. May be involved in osteoblast compaction. May play role in myoblast differentiation and fusion during skeletal myogenesis. In Xenopus laevis (African clawed frog), this protein is Integrin beta-1-A (itgb1-a).